The following is a 324-amino-acid chain: Serpentine receptor class delta-30 (324 aa).

The next 7 membrane-spanning stretches (helical) occupy residues 5 to 25, 38 to 58, 83 to 103, 124 to 144, 176 to 196, 227 to 247, and 258 to 278; these read IIHSVLSTVGVSLNAFMMYLA, AIITIKTGTDILASIMSFFVM, ACYVGHMLMLCFLEYNLIWMI, VFVAFCLSIPSMVHMAAWFSF, ITLITQLFITAFLVVVAYIWI, FQVFLPSFIFLGVITFASMFT, and AISVIFMFSPICSPFSYILFV. The disordered stretch occupies residues 290 to 324; it reads KQPKPHPEMCGPIRSNTRTTSISVTNNSSHLSSAH. The segment covering 303–324 has biased composition (polar residues); it reads RSNTRTTSISVTNNSSHLSSAH.

Belongs to the nematode receptor-like protein srd family.

Its subcellular location is the membrane. This Caenorhabditis elegans protein is Serpentine receptor class delta-30 (srd-30).